We begin with the raw amino-acid sequence, 657 residues long: Probable serine/threonine-protein kinase CA_C1728 (657 aa).

The Protein kinase domain maps to 10–274 (YKIEEEIGVG…ELSNVKNNYV (265 aa)). Residues 16–24 (IGVGGTAVV) and Lys-39 each bind ATP. Asp-143 (proton acceptor) is an active-site residue. The disordered stretch occupies residues 286–334 (PAQIQNESNPNNKLDNDDTYYNGEPYNKEQPQEEPQEENEEPKNKIKGN). Over residues 288-298 (QIQNESNPNNK) the composition is skewed to polar residues. PASTA domains lie at 375 to 441 (SVSK…DISS), 443 to 509 (DTDQ…VISR), and 512 to 577 (EVKK…VIGR). Residues 581–657 (TAVQPPNNNN…TNTPNGTGQK (77 aa)) form a disordered region. Composition is skewed to low complexity over residues 584 to 600 (QPPNNNNGNGNQNQNQN), 613 to 637 (PTGGNNDNQNQNNTTNPNGTQPAGG), and 645 to 657 (GNVTNTPNGTGQK).

This sequence belongs to the protein kinase superfamily. Ser/Thr protein kinase family.

The catalysed reaction is L-seryl-[protein] + ATP = O-phospho-L-seryl-[protein] + ADP + H(+). The enzyme catalyses L-threonyl-[protein] + ATP = O-phospho-L-threonyl-[protein] + ADP + H(+). The protein is Probable serine/threonine-protein kinase CA_C1728 of Clostridium acetobutylicum (strain ATCC 824 / DSM 792 / JCM 1419 / IAM 19013 / LMG 5710 / NBRC 13948 / NRRL B-527 / VKM B-1787 / 2291 / W).